A 122-amino-acid polypeptide reads, in one-letter code: Large ribosomal subunit protein uL14 (122 aa).

This sequence belongs to the universal ribosomal protein uL14 family. As to quaternary structure, part of the 50S ribosomal subunit. Forms a cluster with proteins L3 and L19. In the 70S ribosome, L14 and L19 interact and together make contacts with the 16S rRNA in bridges B5 and B8.

Binds to 23S rRNA. Forms part of two intersubunit bridges in the 70S ribosome. The sequence is that of Large ribosomal subunit protein uL14 from Streptococcus pneumoniae (strain JJA).